We begin with the raw amino-acid sequence, 101 residues long: Small integral membrane protein 19 (101 aa).

The helical transmembrane segment at 25 to 43 threads the bilayer; it reads ATNVYLIVILVSIGLFMYA.

Belongs to the SMIM19 family.

The protein resides in the membrane. The protein is Small integral membrane protein 19 (smim19) of Xenopus tropicalis (Western clawed frog).